Consider the following 243-residue polypeptide: Glucosamine-6-phosphate deaminase (243 aa).

The Proton acceptor; for enolization step role is filled by D67. N137 acts as the For ring-opening step in catalysis. H139 acts as the Proton acceptor; for ring-opening step in catalysis. E144 functions as the For ring-opening step in the catalytic mechanism.

Belongs to the glucosamine/galactosamine-6-phosphate isomerase family. NagB subfamily.

The enzyme catalyses alpha-D-glucosamine 6-phosphate + H2O = beta-D-fructose 6-phosphate + NH4(+). It functions in the pathway amino-sugar metabolism; N-acetylneuraminate degradation; D-fructose 6-phosphate from N-acetylneuraminate: step 5/5. Functionally, catalyzes the reversible isomerization-deamination of glucosamine 6-phosphate (GlcN6P) to form fructose 6-phosphate (Fru6P) and ammonium ion. The protein is Glucosamine-6-phosphate deaminase of Staphylococcus epidermidis (strain ATCC 12228 / FDA PCI 1200).